The chain runs to 500 residues: Cysteine--tRNA ligase (500 aa).

Cysteine 30 contributes to the Zn(2+) binding site. The short motif at 32 to 42 (PTVYDYAHIGN) is the 'HIGH' region element. Cysteine 224, histidine 263, and glutamate 267 together coordinate Zn(2+). Positions 296-300 (KMSKS) match the 'KMSKS' region motif. Lysine 299 contacts ATP.

Belongs to the class-I aminoacyl-tRNA synthetase family. In terms of assembly, monomer. Zn(2+) is required as a cofactor.

The protein resides in the cytoplasm. It carries out the reaction tRNA(Cys) + L-cysteine + ATP = L-cysteinyl-tRNA(Cys) + AMP + diphosphate. This Bartonella bacilliformis (strain ATCC 35685 / KC583 / Herrer 020/F12,63) protein is Cysteine--tRNA ligase.